The chain runs to 504 residues: Aromatic and large neutral amino acid transporter 5-3 (504 aa).

The segment at 1-24 is disordered; that stretch reads MESTEATMVERKAESPSSGDRARS. Residues 8-24 show a composition bias toward basic and acidic residues; the sequence is MVERKAESPSSGDRARS. 6 helical membrane passes run 76 to 96, 138 to 158, 165 to 185, 206 to 226, 233 to 253, and 256 to 276; these read YVVL…FMNW, HLFT…GIML, FGAL…GFSS, FFPC…IIAV, ISFI…GATF, and VMLG…LFII. N-linked (GlcNAc...) asparagine glycosylation occurs at N310. The next 6 membrane-spanning stretches (helical) occupy residues 324 to 344, 356 to 376, 381 to 401, 406 to 426, 436 to 456, and 475 to 495; these read LSFL…LFFA, EANQ…GGIA, IVPV…LMLI, CFAA…SFLV, IFYP…GGII, and MTVL…FMYV.

The protein belongs to the SLC43A transporter (TC 2.A.1.44) family.

It localises to the cell membrane. The enzyme catalyses L-tyrosine(in) = L-tyrosine(out). Its activity is regulated as follows. L-tyrosine uptake is stimulated in trans by aromatic and large neutral amino acids, but not smaller or charged amino acids. In terms of biological role, L-tyrosine transporter that is essential for parasite survival and virulence. May also act as an aromatic and large neutral amino acid transporter. Does not cotransport other charged ions. Involved in amino acid homeostasis by facilitating the net uptake of L-tyrosine and maintaining intracellular pools of aromatic and large neutral amino acids through exchange. This Toxoplasma gondii protein is Aromatic and large neutral amino acid transporter 5-3.